Consider the following 228-residue polypeptide: MIDKSAATLTEALSQIHDGATILIGGFGTAGQPAELIDGLIELGRKNLTIVSNNAGNGDYGLAKLLKTGAVKKIICSFPRQADSYVFDELYRAGKIELEIVPQGNLACRIQAAGMGLGPIYTPTGFGTLLAEGKPTLNFDGKDYVLENPIKADFALIKAYKGDRWGNLVYRKSARNFGPIMAMAANVTIAQVSEVVALGELDPENVVTPGIFVQHVVPVQSTPASAAP.

Residue 25–31 (GGFGTAG) participates in CoA binding.

The protein belongs to the 3-oxoacid CoA-transferase subunit A family. Heterodimer.

It catalyses the reaction 3-oxoadipate + succinyl-CoA = 3-oxoadipyl-CoA + succinate. It functions in the pathway aromatic compound metabolism; beta-ketoadipate pathway; acetyl-CoA and succinyl-CoA from 3-oxoadipate: step 1/2. This Acinetobacter baylyi (strain ATCC 33305 / BD413 / ADP1) protein is 3-oxoadipate CoA-transferase subunit A (pcaI).